The chain runs to 37 residues: Large ribosomal subunit protein bL36c (37 aa).

This sequence belongs to the bacterial ribosomal protein bL36 family.

The protein localises to the plastid. It is found in the chloroplast. The protein is Large ribosomal subunit protein bL36c of Piper cenocladum (Ant piper).